The chain runs to 236 residues: Small ribosomal subunit protein uS2c (236 aa).

The protein belongs to the universal ribosomal protein uS2 family.

The protein resides in the plastid. Its subcellular location is the chloroplast. The polypeptide is Small ribosomal subunit protein uS2c (rps2) (Nymphaea alba (White water-lily)).